A 58-amino-acid polypeptide reads, in one-letter code: Mu-diguetoxin-Dc1b (58 aa).

4 cysteine pairs are disulfide-bonded: Cys-12-Cys-26, Cys-20-Cys-40, Cys-25-Cys-54, and Cys-42-Cys-52.

It belongs to the neurotoxin 26 (DTX) family. In terms of tissue distribution, expressed by the venom gland.

It is found in the secreted. Functionally, acts by delaying the inactivation of presynaptic voltage-sensitive sodium channels (Nav). Acts against insects and cause a progressive spastic paralysis. In Diguetia canities (Desert bush spider), this protein is Mu-diguetoxin-Dc1b.